A 188-amino-acid polypeptide reads, in one-letter code: Elongation factor P (188 aa).

The protein belongs to the elongation factor P family.

The protein resides in the cytoplasm. The protein operates within protein biosynthesis; polypeptide chain elongation. Involved in peptide bond synthesis. Stimulates efficient translation and peptide-bond synthesis on native or reconstituted 70S ribosomes in vitro. Probably functions indirectly by altering the affinity of the ribosome for aminoacyl-tRNA, thus increasing their reactivity as acceptors for peptidyl transferase. This is Elongation factor P from Mycoplasmoides gallisepticum (strain R(low / passage 15 / clone 2)) (Mycoplasma gallisepticum).